The chain runs to 261 residues: Peroxiredoxin PRX1, mitochondrial (261 aa).

Residues 1–13 (MFSRICSAQLKRT) constitute a mitochondrion transit peptide. One can recognise a Thioredoxin domain in the interval 49-212 (LRINSDAPNF…VLRVIDALQL (164 aa)). Serine 53 carries the post-translational modification Phosphoserine. Catalysis depends on cysteine 91, which acts as the Cysteine sulfenic acid (-SOH) intermediate.

Belongs to the peroxiredoxin family. Prx6 subfamily. Homodimer; disulfide-linked.

The protein resides in the mitochondrion. The enzyme catalyses a hydroperoxide + 2 glutathione = an alcohol + glutathione disulfide + H2O. It carries out the reaction [glutaredoxin]-dithiol + a hydroperoxide = [glutaredoxin]-disulfide + an alcohol + H2O. Its function is as follows. Thiol-specific peroxidase that catalyzes the reduction of hydrogen peroxide and organic hydroperoxides to water and alcohols, respectively. Plays a role in cell protection against oxidative stress by detoxifying peroxides and as sensor of hydrogen peroxide-mediated signaling events. Involved in mitochondrial protection of cadmium-induced oxidative stress. This Saccharomyces cerevisiae (strain ATCC 204508 / S288c) (Baker's yeast) protein is Peroxiredoxin PRX1, mitochondrial.